The sequence spans 410 residues: Multidrug resistance protein MdtA (410 aa).

An N-terminal signal peptide occupies residues 1–21 (MNNRYPVMKKGLIVLVVIAVA). Positions 36-56 (SDGDLSGQSAHGKRGNGAHKP) are disordered.

It belongs to the membrane fusion protein (MFP) (TC 8.A.1) family. In terms of assembly, part of a tripartite efflux system composed of MdtA, MdtB and MdtC.

Its subcellular location is the cell inner membrane. This Pantoea ananatis (strain AJ13355) protein is Multidrug resistance protein MdtA.